The primary structure comprises 301 residues: uncharacterized protein (301 aa).

Residues Glu146, Glu148, and Asp177 each coordinate a divalent metal cation.

Belongs to the FAH family.

This is an uncharacterized protein from Staphylococcus haemolyticus (strain JCSC1435).